The chain runs to 333 residues: Photosystem II assembly lipoprotein Ycf48 (333 aa).

The signal sequence occupies residues 1–23 (MNRLLSSAVNLLLVLVLGVGLSG). C24 carries the N-palmitoyl cysteine lipid modification. The S-diacylglycerol cysteine moiety is linked to residue C24.

The protein belongs to the Ycf48 family. In terms of assembly, part of early PSII assembly complexes which includes D1 (psbA) and PsbI; not found in mature PSII. Binds to the lumenal side of PSII complexes. Interacts with YidC.

The protein localises to the cellular thylakoid membrane. In terms of biological role, a factor required for optimal assembly of photosystem II (PSII), acting in the early stages of PSII assembly. Also plays a role in replacement of photodamaged D1 (psbA). Assists YidC in synthesis of chlorophyll-binding proteins. The sequence is that of Photosystem II assembly lipoprotein Ycf48 from Synechococcus sp. (strain CC9902).